The sequence spans 237 residues: LexA repressor (237 aa).

Residues 26–46 (FDEMKEALDLRSKSGIHRLIT) constitute a DNA-binding region (H-T-H motif). The disordered stretch occupies residues 84-110 (GFSPSVIEGGAQPKPSSRDLAPARSSG). Active-site for autocatalytic cleavage activity residues include S158 and K196.

The protein belongs to the peptidase S24 family. As to quaternary structure, homodimer.

It catalyses the reaction Hydrolysis of Ala-|-Gly bond in repressor LexA.. In terms of biological role, represses a number of genes involved in the response to DNA damage (SOS response), including recA and lexA. In the presence of single-stranded DNA, RecA interacts with LexA causing an autocatalytic cleavage which disrupts the DNA-binding part of LexA, leading to derepression of the SOS regulon and eventually DNA repair. This chain is LexA repressor, found in Parvibaculum lavamentivorans (strain DS-1 / DSM 13023 / NCIMB 13966).